We begin with the raw amino-acid sequence, 358 residues long: Chorismate synthase (358 aa).

Arginine 48 is a binding site for NADP(+). FMN-binding positions include 125–127, serine 277, 292–296, and arginine 318; these read RAS and KPIPS.

This sequence belongs to the chorismate synthase family. As to quaternary structure, homotetramer. The cofactor is FMNH2.

The catalysed reaction is 5-O-(1-carboxyvinyl)-3-phosphoshikimate = chorismate + phosphate. Its pathway is metabolic intermediate biosynthesis; chorismate biosynthesis; chorismate from D-erythrose 4-phosphate and phosphoenolpyruvate: step 7/7. Catalyzes the anti-1,4-elimination of the C-3 phosphate and the C-6 proR hydrogen from 5-enolpyruvylshikimate-3-phosphate (EPSP) to yield chorismate, which is the branch point compound that serves as the starting substrate for the three terminal pathways of aromatic amino acid biosynthesis. This reaction introduces a second double bond into the aromatic ring system. The polypeptide is Chorismate synthase (Desulfatibacillum aliphaticivorans).